Here is a 485-residue protein sequence, read N- to C-terminus: Peroxisomal catalase (485 aa).

Catalysis depends on residues His53 and Asn126. Residue Tyr336 participates in heme binding.

This sequence belongs to the catalase family. In terms of assembly, homotetramer. Requires heme as cofactor.

The protein localises to the peroxisome matrix. It carries out the reaction 2 H2O2 = O2 + 2 H2O. In terms of biological role, catalyzes the degradation of hydrogen peroxide (H(2)O(2)) generated by peroxisomal oxidases to water and oxygen, thereby protecting cells from the toxic effects of hydrogen peroxide. This is Peroxisomal catalase (POX9) from Candida tropicalis (Yeast).